We begin with the raw amino-acid sequence, 229 residues long: UPF0758 protein GSU0386 (229 aa).

One can recognise an MPN domain in the interval Arg-107 to Leu-229. 3 residues coordinate Zn(2+): His-178, His-180, and Asp-191. The JAMM motif signature appears at His-178–Asp-191.

It belongs to the UPF0758 family.

The chain is UPF0758 protein GSU0386 from Geobacter sulfurreducens (strain ATCC 51573 / DSM 12127 / PCA).